We begin with the raw amino-acid sequence, 530 residues long: Arginine--tRNA ligase (530 aa).

Positions 113–123 (ANPTGPLHIGH) match the 'HIGH' region motif.

This sequence belongs to the class-I aminoacyl-tRNA synthetase family. Monomer.

Its subcellular location is the cytoplasm. It catalyses the reaction tRNA(Arg) + L-arginine + ATP = L-arginyl-tRNA(Arg) + AMP + diphosphate. This chain is Arginine--tRNA ligase, found in Campylobacter jejuni (strain RM1221).